We begin with the raw amino-acid sequence, 438 residues long: Chaperone SurA (438 aa).

Positions 1 to 28 (MKTMNPYIRHLILLICCLGGMLAQPLSA) are cleaved as a signal peptide. PpiC domains follow at residues 181–282 (EEEY…KLVS) and 292–390 (VQQT…QVLE).

It localises to the periplasm. It catalyses the reaction [protein]-peptidylproline (omega=180) = [protein]-peptidylproline (omega=0). Chaperone involved in the correct folding and assembly of outer membrane proteins. Recognizes specific patterns of aromatic residues and the orientation of their side chains, which are found more frequently in integral outer membrane proteins. May act in both early periplasmic and late outer membrane-associated steps of protein maturation. This chain is Chaperone SurA, found in Dechloromonas aromatica (strain RCB).